The primary structure comprises 258 residues: Probable parvulin-type peptidyl-prolyl cis-trans isomerase (258 aa).

Positions 1–19 (MKRIAMLAAACVIAVPAFA) are cleaved as a signal peptide. In terms of domain architecture, PpiC spans 127–219 (KMEYKVRHIL…FGWHVIQVDD (93 aa)). Basic and acidic residues predominate over residues 158-175 (DDLAKKNSKDPGSAERGG). The segment at 158–178 (DDLAKKNSKDPGSAERGGDLG) is disordered.

This sequence belongs to the PpiC/parvulin rotamase family.

It catalyses the reaction [protein]-peptidylproline (omega=180) = [protein]-peptidylproline (omega=0). The chain is Probable parvulin-type peptidyl-prolyl cis-trans isomerase from Bordetella bronchiseptica (strain ATCC BAA-588 / NCTC 13252 / RB50) (Alcaligenes bronchisepticus).